Consider the following 269-residue polypeptide: Histone deacetylase HDT1 (269 aa).

Residues 97 to 269 (PFEEEEDDED…HSKAKHSAGK (173 aa)) are disordered. 2 stretches are compositionally biased toward acidic residues: residues 98 to 115 (FEEE…DEDI) and 153 to 179 (KDDE…DSEE). Residues 228-238 (PSKQASKTPKS) are compositionally biased toward polar residues. Residues 242-265 (HHCKPCNRSFGSEGALDSHSKAKH) form a C2H2-type zinc finger.

The protein belongs to the histone deacetylase HD2 family. In terms of tissue distribution, predominantly expressed in ovaries. Accumulates predominantly in the micropylar region of the ovule's integument.

It is found in the nucleus. It localises to the nucleolus. Functionally, mediates the deacetylation of lysine residues on the N-terminal part of the core histones (H2A, H2B, H3 and H4). Histone deacetylation gives a tag for epigenetic repression and plays an important role in transcriptional regulation, cell cycle progression and developmental events. This Solanum chacoense (Chaco potato) protein is Histone deacetylase HDT1 (HDT1).